Reading from the N-terminus, the 692-residue chain is Proprotein convertase subtilisin/kexin type 9 (692 aa).

Residues 1 to 30 form the signal peptide; sequence MGTVSSRRSWWPLPLLLLLLLLLGPAGARA. A propeptide spanning residues 31 to 152 is cleaved from the precursor; the sequence is QEDEDGDYEE…IEEDSSVFAQ (122 aa). Tyr-38 is modified (sulfotyrosine). Ser-47 is subject to Phosphoserine. The Inhibitor I9 domain maps to 77-149; it reads TYVVVLKEET…VDYIEEDSSV (73 aa). Positions 155-461 constitute a Peptidase S8 domain; sequence PWNLERITPP…GWQLFCRTVW (307 aa). Catalysis depends on charge relay system residues Asp-186 and His-226. 2 disulfides stabilise this stretch: Cys-223–Cys-255 and Cys-323–Cys-358. Ser-386 acts as the Charge relay system in catalysis. The segment at 450–692 is C-terminal domain; it reads GAGWQLFCRT…HLAQASQELQ (243 aa). 3 disulfides stabilise this stretch: Cys-457/Cys-527, Cys-477/Cys-526, and Cys-486/Cys-509. Asn-533 carries N-linked (GlcNAc...) asparagine glycosylation. 6 disulfide bridges follow: Cys-534–Cys-601, Cys-552–Cys-600, Cys-562–Cys-588, Cys-608–Cys-679, Cys-626–Cys-678, and Cys-635–Cys-654. Position 688 is a phosphoserine (Ser-688).

This sequence belongs to the peptidase S8 family. In terms of assembly, monomer. Can self-associate to form dimers and higher multimers which may have increased LDLR degrading activity. The precursor protein but not the mature protein may form multimers. Interacts with APOB, VLDLR, LRP8/APOER2 and BACE1. The full-length immature form (pro-PCSK9) interacts with SCNN1A, SCNN1B and SCNN1G. The pro-PCSK9 form (via C-terminal domain) interacts with LDLR. Interacts (via the C-terminal domain) with ANXA2 (via repeat Annexin 1); the interaction inhibits the degradation of LDLR. The cofactor is Ca(2+). Post-translationally, cleavage by furin and PCSK5 generates a truncated inactive protein that is unable to induce LDLR degradation. Undergoes autocatalytic cleavage in the endoplasmic reticulum to release the propeptide from the N-terminus and the cleavage of the propeptide is strictly required for its maturation and activation. The cleaved propeptide however remains associated with the catalytic domain through non-covalent interactions, preventing potential substrates from accessing its active site. As a result, it is secreted from cells as a propeptide-containing, enzymatically inactive protein. In terms of processing, phosphorylation protects the propeptide against proteolysis.

The protein localises to the cytoplasm. It localises to the secreted. Its subcellular location is the endosome. The protein resides in the lysosome. It is found in the cell surface. The protein localises to the endoplasmic reticulum. It localises to the golgi apparatus. Its activity is regulated as follows. Its proteolytic activity is autoinhibited by the non-covalent binding of the propeptide to the catalytic domain. Inhibited by EGTA. Functionally, crucial player in the regulation of plasma cholesterol homeostasis. Binds to low-density lipid receptor family members: low density lipoprotein receptor (LDLR), very low density lipoprotein receptor (VLDLR), apolipoprotein E receptor (LRP1/APOER) and apolipoprotein receptor 2 (LRP8/APOER2), and promotes their degradation in intracellular acidic compartments. Acts via a non-proteolytic mechanism to enhance the degradation of the hepatic LDLR through a clathrin LDLRAP1/ARH-mediated pathway. May prevent the recycling of LDLR from endosomes to the cell surface or direct it to lysosomes for degradation. Can induce ubiquitination of LDLR leading to its subsequent degradation. Inhibits intracellular degradation of APOB via the autophagosome/lysosome pathway in a LDLR-independent manner. Involved in the disposal of non-acetylated intermediates of BACE1 in the early secretory pathway. Inhibits epithelial Na(+) channel (ENaC)-mediated Na(+) absorption by reducing ENaC surface expression primarily by increasing its proteasomal degradation. Regulates neuronal apoptosis via modulation of LRP8/APOER2 levels and related anti-apoptotic signaling pathways. This chain is Proprotein convertase subtilisin/kexin type 9 (PCSK9), found in Pan troglodytes (Chimpanzee).